Reading from the N-terminus, the 581-residue chain is Semenogelin-2 (581 aa).

The signal sequence occupies residues M1–G23. Disordered regions lie at residues Q24–S62, G132–S157, K173–Y194, and N271–T581. 2 stretches are compositionally biased toward polar residues: residues G138–S157 and E174–Y194. A compositionally biased stretch (basic and acidic residues) spans H291–K310. The span at K324–S333 shows a compositional bias: polar residues. The segment covering Q334 to K344 has biased composition (basic and acidic residues). A compositionally biased stretch (polar residues) spans K366–Q396. 2 stretches are compositionally biased toward basic and acidic residues: residues T412–Q425 and D455–K464. Polar residues-rich tracts occupy residues G481–T497 and S505–S529. Composition is skewed to basic and acidic residues over residues A530–Y545 and T558–T581.

The protein belongs to the semenogelin family. As to quaternary structure, interacts with SERPINA5.

The protein localises to the secreted. Functionally, participates in the formation of a gel matrix (sperm coagulum) entrapping the accessory gland secretions and ejaculated spermatozoa. In Pongo abelii (Sumatran orangutan), this protein is Semenogelin-2 (SEMG2).